Here is a 186-residue protein sequence, read N- to C-terminus: Lipid A palmitoyltransferase PagP (186 aa).

A signal peptide spans 1–25; that stretch reads MNVSKYVAIFSFVFIQLISVGKVFA. Residues His-58, Asp-101, and Ser-102 contribute to the active site.

Belongs to the lipid A palmitoyltransferase family. Homodimer.

The protein localises to the cell outer membrane. It catalyses the reaction lipid A (E. coli) + a 1-hexadecanoyl-2-acyl-sn-glycero-3-phosphocholine = hepta-acyl lipid A (E. coli) + a 2-acyl-sn-glycero-3-phosphocholine. It carries out the reaction lipid IIA + a 1-hexadecanoyl-2-acyl-sn-glycero-3-phosphocholine = lipid IIB + a 2-acyl-sn-glycero-3-phosphocholine. The enzyme catalyses lipid IVA (E. coli) + a 1-hexadecanoyl-2-acyl-sn-glycero-3-phosphocholine = lipid IVB (E. coli) + a 2-acyl-sn-glycero-3-phosphocholine. Inhibited by lauryldimethylamine oxide (LDAO) and dodecylphosphocholine (DPC). In terms of biological role, transfers a palmitate residue from the sn-1 position of a phospholipid to the N-linked hydroxymyristate on the proximal unit of lipid A or its precursors. Phosphatidylglycerol (PtdGro), phosphatidylethanolamine (PtdEtn), phosphatidylserine (PtdSer) and phosphatidic acid (Ptd-OH) are all effective acyl donors. In Escherichia coli (strain K12), this protein is Lipid A palmitoyltransferase PagP.